The chain runs to 186 residues: ATP synthase subunit delta (186 aa).

The protein belongs to the ATPase delta chain family. F-type ATPases have 2 components, F(1) - the catalytic core - and F(0) - the membrane proton channel. F(1) has five subunits: alpha(3), beta(3), gamma(1), delta(1), epsilon(1). CF(0) has four main subunits: a(1), b(1), b'(1) and c(10-14). The alpha and beta chains form an alternating ring which encloses part of the gamma chain. F(1) is attached to F(0) by a central stalk formed by the gamma and epsilon chains, while a peripheral stalk is formed by the delta, b and b' chains.

It is found in the cell inner membrane. Its function is as follows. F(1)F(0) ATP synthase produces ATP from ADP in the presence of a proton or sodium gradient. F-type ATPases consist of two structural domains, F(1) containing the extramembraneous catalytic core and F(0) containing the membrane proton channel, linked together by a central stalk and a peripheral stalk. During catalysis, ATP synthesis in the catalytic domain of F(1) is coupled via a rotary mechanism of the central stalk subunits to proton translocation. Functionally, this protein is part of the stalk that links CF(0) to CF(1). It either transmits conformational changes from CF(0) to CF(1) or is implicated in proton conduction. The chain is ATP synthase subunit delta from Roseobacter denitrificans (strain ATCC 33942 / OCh 114) (Erythrobacter sp. (strain OCh 114)).